A 131-amino-acid polypeptide reads, in one-letter code: Heat shock protein 15 homolog (131 aa).

The region spanning 6–67 (VRLDKWLWAA…NEEKEIKIIA (62 aa)) is the S4 RNA-binding domain. The disordered stretch occupies residues 98 to 131 (ARKNNSLSMPHPDRRPNKKERRDLLKFKHQDKFE). Residues 108–131 (HPDRRPNKKERRDLLKFKHQDKFE) are compositionally biased toward basic and acidic residues.

This sequence belongs to the HSP15 family.

Functionally, involved in the recycling of free 50S ribosomal subunits that still carry a nascent chain. Binds RNA more specifically than DNA. Binds with very high affinity to the free 50S ribosomal subunit. Does not bind it when it is part of the 70S ribosome. The protein is Heat shock protein 15 homolog (hslR) of Haemophilus influenzae (strain ATCC 51907 / DSM 11121 / KW20 / Rd).